We begin with the raw amino-acid sequence, 215 residues long: Cytochrome b6 (215 aa).

The chain crosses the membrane as a helical span at residues 32-52; that stretch reads IFYCLGGITLTCFLVQVATGF. Cys35 serves as a coordination point for heme c. Positions 86 and 100 each coordinate heme b. Transmembrane regions (helical) follow at residues 90-110, 116-136, and 186-206; these read ASMM…TGGF, LTWV…VTGY, and LHTF…FLMI. 2 residues coordinate heme b: His187 and His202.

It belongs to the cytochrome b family. PetB subfamily. In terms of assembly, the 4 large subunits of the cytochrome b6-f complex are cytochrome b6, subunit IV (17 kDa polypeptide, PetD), cytochrome f and the Rieske protein, while the 4 small subunits are PetG, PetL, PetM and PetN. The complex functions as a dimer. Heme b serves as cofactor. Requires heme c as cofactor.

It localises to the plastid. The protein resides in the chloroplast thylakoid membrane. Functionally, component of the cytochrome b6-f complex, which mediates electron transfer between photosystem II (PSII) and photosystem I (PSI), cyclic electron flow around PSI, and state transitions. The sequence is that of Cytochrome b6 from Hordeum vulgare (Barley).